The following is a 96-amino-acid chain: Large ribosomal subunit protein bL21 (96 aa).

Belongs to the bacterial ribosomal protein bL21 family. In terms of assembly, part of the 50S ribosomal subunit. Contacts protein L20.

Its function is as follows. This protein binds to 23S rRNA in the presence of protein L20. This chain is Large ribosomal subunit protein bL21, found in Prosthecochloris aestuarii (strain DSM 271 / SK 413).